Consider the following 228-residue polypeptide: MASTASEIIAFMVSISGWVLVSSTLPTDYWKVSTIDGTVITTATYWANLWKACVTDSTGVSNCKDFPSMLALDGYIQACRGLMIAAVSLGFFGSIFALFGMKCTKVGGSDKAKAKIACLAGIVFILSGLCSMTGCSLYANKITTEFFDPLFVEQKYELGAALFIGWAGASLCIIGGVIFCFSISDNNKTPRYTYNGATSVMSSRTKYHGGEDFKTTNPSKQFDKNAYV.

A helical transmembrane segment spans residues Met-1–Val-21. The Extracellular segment spans residues Ser-22–Arg-80. Residues Gly-81–Met-101 form a helical membrane-spanning segment. Over Lys-102–Lys-115 the chain is Cytoplasmic. A helical membrane pass occupies residues Ile-116 to Ser-136. Residues Leu-137–Ala-160 lie on the Extracellular side of the membrane. Residues Ala-161–Phe-181 form a helical membrane-spanning segment. At Ser-182–Val-228 the chain is on the cytoplasmic side.

This sequence belongs to the claudin family. As to quaternary structure, can form homodimers both in trans (interaction between CLDN10 molecules in opposing membranes) and in cis (interaction between CLDN10 molecules within one membrane). In terms of assembly, interacts with CLDN19. As to expression, expressed in the kidney, eccrine sweat glands and in all layers of the epidermis. In the kidney, it is detected in the thick ascending limb of Henle's loop (TAL). In the sweat glands, it is expressed in cells from secretory portions, corresponding to the clear cells.

The protein localises to the cell junction. Its subcellular location is the tight junction. It is found in the cell membrane. It catalyses the reaction Na(+)(in) = Na(+)(out). The catalysed reaction is Li(+)(in) = Li(+)(out). The enzyme catalyses K(+)(in) = K(+)(out). It carries out the reaction Rb(+)(in) = Rb(+)(out). It catalyses the reaction Cs(+)(in) = Cs(+)(out). The catalysed reaction is NH4(+)(in) = NH4(+)(out). The enzyme catalyses methylamine(out) = methylamine(in). It carries out the reaction Mg(2+)(in) = Mg(2+)(out). It catalyses the reaction Ca(2+)(in) = Ca(2+)(out). The catalysed reaction is Sr(2+)(in) = Sr(2+)(out). The enzyme catalyses chloride(in) = chloride(out). It carries out the reaction nitrate(in) = nitrate(out). Functionally, forms paracellular channels: polymerizes in tight junction strands with cation- and anion-selective channels through the strands, conveying epithelial permeability in a process known as paracellular tight junction permeability. Forms cation-selective paracellular channels. In sweat glands and in the thick ascending limb (TAL) of Henle's loop in kidney, it controls paracellular sodium permeability which is essential for proper sweat production and renal function. In terms of biological role, forms anion-selective paracellular channels. In renal proximal tubules, it conveys selective chloride over hydrogencarbonate anion permeability which is required for renal chloride reabsorption and salt homeostasis. The protein is Claudin-10 of Homo sapiens (Human).